Here is a 374-residue protein sequence, read N- to C-terminus: o-succinylbenzoate synthase (374 aa).

The active-site Proton donor is Lys164. The Mg(2+) site is built by Asp189, Glu214, and Asp239. Lys263 acts as the Proton acceptor in catalysis.

The protein belongs to the mandelate racemase/muconate lactonizing enzyme family. MenC type 2 subfamily. As to quaternary structure, homodimer. A divalent metal cation serves as cofactor.

The enzyme catalyses (1R,6R)-6-hydroxy-2-succinyl-cyclohexa-2,4-diene-1-carboxylate = 2-succinylbenzoate + H2O. It functions in the pathway quinol/quinone metabolism; 1,4-dihydroxy-2-naphthoate biosynthesis; 1,4-dihydroxy-2-naphthoate from chorismate: step 4/7. Its pathway is quinol/quinone metabolism; menaquinone biosynthesis. In terms of biological role, converts 2-succinyl-6-hydroxy-2,4-cyclohexadiene-1-carboxylate (SHCHC) to 2-succinylbenzoate (OSB). Also acts as a N-succinylamino acid racemase (NSAR) that catalyzes the racemization of N-succinyl-L-phenylglycine. L.innocua has the menaquinone synthesis pathway, indicating that the species requires OSBS activity. However, the NSAR/OSBS is not encoded in the menaquinone operon, raising the possibility that both NSAR and OSBS are biological functions. The protein is o-succinylbenzoate synthase of Listeria innocua serovar 6a (strain ATCC BAA-680 / CLIP 11262).